A 433-amino-acid chain; its full sequence is 3-phosphoshikimate 1-carboxyvinyltransferase (433 aa).

3 residues coordinate 3-phosphoshikimate: lysine 15, serine 16, and arginine 20. Residue lysine 15 coordinates phosphoenolpyruvate. Glycine 96 and arginine 124 together coordinate phosphoenolpyruvate. 3-phosphoshikimate-binding residues include serine 169, glutamine 171, aspartate 318, and lysine 345. Position 171 (glutamine 171) interacts with phosphoenolpyruvate. The Proton acceptor role is filled by aspartate 318. 2 residues coordinate phosphoenolpyruvate: arginine 349 and arginine 393.

The protein belongs to the EPSP synthase family. In terms of assembly, monomer.

It is found in the cytoplasm. The catalysed reaction is 3-phosphoshikimate + phosphoenolpyruvate = 5-O-(1-carboxyvinyl)-3-phosphoshikimate + phosphate. It participates in metabolic intermediate biosynthesis; chorismate biosynthesis; chorismate from D-erythrose 4-phosphate and phosphoenolpyruvate: step 6/7. Catalyzes the transfer of the enolpyruvyl moiety of phosphoenolpyruvate (PEP) to the 5-hydroxyl of shikimate-3-phosphate (S3P) to produce enolpyruvyl shikimate-3-phosphate and inorganic phosphate. This Chlorobium phaeovibrioides (strain DSM 265 / 1930) (Prosthecochloris vibrioformis (strain DSM 265)) protein is 3-phosphoshikimate 1-carboxyvinyltransferase.